A 181-amino-acid polypeptide reads, in one-letter code: Large ribosomal subunit protein uL5 (181 aa).

It belongs to the universal ribosomal protein uL5 family. As to quaternary structure, part of the 50S ribosomal subunit; contacts the 5S rRNA and probably tRNA. Forms a bridge to the 30S subunit in the 70S ribosome.

In terms of biological role, this is one of the proteins that bind and probably mediate the attachment of the 5S RNA into the large ribosomal subunit, where it forms part of the central protuberance. In the 70S ribosome it contacts protein S13 of the 30S subunit (bridge B1b), connecting the 2 subunits; this bridge is implicated in subunit movement. May contact the P site tRNA; the 5S rRNA and some of its associated proteins might help stabilize positioning of ribosome-bound tRNAs. The chain is Large ribosomal subunit protein uL5 from Methanococcus aeolicus (strain ATCC BAA-1280 / DSM 17508 / OCM 812 / Nankai-3).